A 410-amino-acid chain; its full sequence is uncharacterized protein (410 aa).

The next 12 helical transmembrane spans lie at I27 to I47, S63 to L83, L97 to V117, L118 to I138, N145 to G165, I180 to L200, V228 to N248, L254 to L274, N293 to N313, F316 to S332, Y355 to F375, and Q378 to F398.

It belongs to the major facilitator superfamily.

Its subcellular location is the cell membrane. This is an uncharacterized protein from Buchnera aphidicola subsp. Acyrthosiphon pisum (strain APS) (Acyrthosiphon pisum symbiotic bacterium).